The following is a 382-amino-acid chain: Mannitol-1-phosphate 5-dehydrogenase (382 aa).

Residue 3–14 (ALHFGAGNIGRG) coordinates NAD(+).

This sequence belongs to the mannitol dehydrogenase family.

It catalyses the reaction D-mannitol 1-phosphate + NAD(+) = beta-D-fructose 6-phosphate + NADH + H(+). The protein is Mannitol-1-phosphate 5-dehydrogenase of Klebsiella pneumoniae (strain 342).